A 423-amino-acid chain; its full sequence is MKEIIARHKAGEHLGICSVCSAHPLVIESALLFDLNTDNKVLIEATSNQVNQFGGYTGMKPADFRDFVYGIAQEVGFPRERLILGGDHLGPNCWQNEPAAAAMEKSVELIKAYVAAGFSKIHLDASMSCADDPTPLDPMVVARRAAVLCKAAEETANEEQKCHLTYVIGTEVPVPGGEASTIGSVHVTREVDAARTLETHQIAFRESGLEEALSRVIAIVVQPGVEFDHTQIIHYQPQAAQALSAWIKETPMVYEAHSTDYQTRQAYRALVRDHYAILKVGPALTFALREAIFALAQMENELISPEQRSRVLEVIDEVMLNEPGYWKKYYRPTWSQAMVDIHFSLSDRIRYYWPHPRIRQSVEKLIANLNNVTLPLGLISQFMPVQFERLSEGVLTPTPHNLIIDKIQDVLRAYRFGCTPDVA.

Belongs to the GatZ/KbaZ family. GatZ subfamily. In terms of assembly, forms a complex with GatY.

The protein operates within carbohydrate metabolism; D-tagatose 6-phosphate degradation; D-glyceraldehyde 3-phosphate and glycerone phosphate from D-tagatose 6-phosphate: step 2/2. Component of the tagatose-1,6-bisphosphate aldolase GatYZ that is required for full activity and stability of the Y subunit. Could have a chaperone-like function for the proper and stable folding of GatY. When expressed alone, GatZ does not show any aldolase activity. Is involved in the catabolism of galactitol. This Salmonella paratyphi B (strain ATCC BAA-1250 / SPB7) protein is D-tagatose-1,6-bisphosphate aldolase subunit GatZ.